The primary structure comprises 494 residues: Keratin, type I cytoskeletal 12 (494 aa).

Positions 1-12 (MDLSNNTMSLSV) are enriched in polar residues. A disordered region spans residues 1–32 (MDLSNNTMSLSVRTPGLSRRLSSQSVIGRPRG). Residues 1–124 (MDLSNNTMSL…GNDGGLLSGS (124 aa)) are head. The interval 125-160 (EKETMQNLNDRLASYLDKVRALEEANTELENKIREW) is coil 1A. Residues 125–440 (EKETMQNLND…RLLDGEAQGD (316 aa)) form the IF rod domain. The tract at residues 164–182 (RGTGTADASQSDYSKYYPL) is linker 1. The segment at 183 to 274 (IEDLRNKIIS…KNHEDELQSF (92 aa)) is coil 1B. A linker 12 region spans residues 275–297 (RVGGPGEVSVEMDAAPGVDLTRL). Residues 298–435 (LNDMRAQYET…IETYRRLLDG (138 aa)) are coil 2. The tract at residues 436-494 (EAQGDGLEESLFVTDSKSQAQSTDSSKDPTKTRKIKTVVQEMVNGEVVSSQVQEIEELM) is tail. The tract at residues 446–468 (LFVTDSKSQAQSTDSSKDPTKTR) is disordered. The span at 448 to 459 (VTDSKSQAQSTD) shows a compositional bias: polar residues.

This sequence belongs to the intermediate filament family. In terms of assembly, heterotetramer of two type I and two type II keratins. Keratin-3 associates with keratin-12. As to expression, expressed in the corneal epithelium (at protein level).

Involved in corneal epithelium organization, integrity and corneal keratin expression. The polypeptide is Keratin, type I cytoskeletal 12 (KRT12) (Homo sapiens (Human)).